A 323-amino-acid polypeptide reads, in one-letter code: Cyclin-H (323 aa).

Ser-5 is modified (phosphoserine; by CDK8). At Ser-132 the chain carries Phosphoserine. Residues 295-323 (KGYEDDDYVSKKPKQEEEEWTDDDLVDSL) form a disordered region. Ser-304 carries the phosphoserine; by CDK8 modification. Residues 310-323 (EEEEWTDDDLVDSL) show a composition bias toward acidic residues. At Thr-315 the chain carries Phosphothreonine. Residue Ser-322 is modified to Phosphoserine.

The protein belongs to the cyclin family. Cyclin C subfamily. As to quaternary structure, associates primarily with CDK7 and MAT1 to form the CAK complex. CAK can further associate with the core-TFIIH to form the TFIIH basal transcription factor. Expressed in both the germinal and somatic cells of the testis.

It is found in the nucleus. In terms of biological role, regulates CDK7, the catalytic subunit of the CDK-activating kinase (CAK) enzymatic complex. CAK activates the cyclin-associated kinases CDK1, CDK2, CDK4 and CDK6 by threonine phosphorylation. CAK complexed to the core-TFIIH basal transcription factor activates RNA polymerase II by serine phosphorylation of the repetitive C-terminal domain (CTD) of its large subunit (POLR2A), allowing its escape from the promoter and elongation of the transcripts. Involved in cell cycle control and in RNA transcription by RNA polymerase II. Its expression and activity are constant throughout the cell cycle. The sequence is that of Cyclin-H (Ccnh) from Mus musculus (Mouse).